We begin with the raw amino-acid sequence, 374 residues long: Glutamine synthetase (374 aa).

The required for glutamine-induced ubiquitination by CRL4(CRBN) and proteasomal degradation stretch occupies residues 2–25 (TTSASSHLNKGIKQVYMSLPQGEK). Residues Lys-11 and Lys-14 each carry the N6-acetyllysine modification. The GS beta-grasp domain maps to 24–106 (EKVQAMYIWI…VLCESFQVQF (83 aa)). A GS catalytic domain is found at 114–374 (LRHTCKRIMD…TGDEPFQYKN (261 aa)). Position 135 (Glu-135) interacts with ATP. Glu-135, Glu-137, Glu-197, and Glu-204 together coordinate Mn(2+). Residue 204 to 209 (EFQIGP) coordinates ATP. Position 247-248 (247-248 (NW)) interacts with L-glutamate. Position 254 (His-254) interacts with Mn(2+). Residues 256–258 (NFS), Arg-320, and Arg-325 each bind ATP. An L-glutamate-binding site is contributed by Arg-320. Residue 337–339 (YFE) coordinates ADP. Residue Glu-339 participates in Mn(2+) binding. An L-glutamate-binding site is contributed by Arg-341. The residue at position 344 (Ser-344) is a Phosphoserine.

It belongs to the glutamine synthetase family. In terms of assembly, decamer; composed of two pentamers. Interacts with PALMD. Interacts with RHOJ. Interacts with BEST2; this interaction tethers a fraction of GLUL to the membrane, causing a decrease of cytosolic glutamine synthase (GS) activity and inhibits the chloride channel activity of BEST2 by affecting the gating at the aperture in the absence of intracellular glutamate. Mg(2+) serves as cofactor. Requires Mn(2+) as cofactor. Post-translationally, palmitoylated; undergoes autopalmitoylation. In terms of processing, acetylated by EP300/p300; acetylation is stimulated by increased glutamine levels and promotes ubiquitin-mediated proteasomal degradation. Ubiquitinated by ZNRF1. Ubiquitinated by the DCX (DDB1-CUL4-X-box) E3 ubiquitin-protein ligase complex called CRL4(CRBN), leading to proteasomal degradation.

The protein localises to the cytoplasm. It localises to the cytosol. It is found in the microsome. Its subcellular location is the mitochondrion. The protein resides in the cell membrane. It catalyses the reaction L-glutamate + NH4(+) + ATP = L-glutamine + ADP + phosphate + H(+). The catalysed reaction is L-cysteinyl-[protein] + hexadecanoyl-CoA = S-hexadecanoyl-L-cysteinyl-[protein] + CoA. Glutamine synthetase activity is inhibited by methionine sulfoximine (MSO). In terms of biological role, glutamine synthetase that catalyzes the ATP-dependent conversion of glutamate and ammonia to glutamine. Its role depends on tissue localization: in the brain, it regulates the levels of toxic ammonia and converts neurotoxic glutamate to harmless glutamine, whereas in the liver, it is one of the enzymes responsible for the removal of ammonia. Plays a key role in ammonium detoxification during erythropoiesis: the glutamine synthetase activity is required to remove ammonium generated by porphobilinogen deaminase (HMBS) during heme biosynthesis to prevent ammonium accumulation and oxidative stress. Essential for proliferation of fetal skin fibroblasts. Independently of its glutamine synthetase activity, required for endothelial cell migration during vascular development. Involved in angiogenesis by regulating membrane localization and activation of the GTPase RHOJ, possibly by promoting RHOJ palmitoylation. May act as a palmitoyltransferase for RHOJ: able to autopalmitoylate and then transfer the palmitoyl group to RHOJ. Plays a role in ribosomal 40S subunit biogenesis. Through the interaction with BEST2, inhibits BEST2 channel activity by affecting the gating at the aperture in the absence of intracellular L-glutamate, but sensitizes BEST2 to intracellular L-glutamate, which promotes the opening of BEST2 and thus relieves its inhibitory effect on BEST2. The chain is Glutamine synthetase from Macaca fascicularis (Crab-eating macaque).